Consider the following 202-residue polypeptide: Venom allergen 5 (202 aa).

Disulfide bonds link Cys-4-Cys-16, Cys-8-Cys-101, and Cys-26-Cys-94. Tyr-107 carries the phosphotyrosine modification. The N-linked (Glc) (glycation) lysine glycan is linked to Lys-138. A disulfide bond links Cys-168 and Cys-185.

Belongs to the CRISP family. Expressed by the venom gland.

Its subcellular location is the secreted. Does not show toxicity when intravenously injected into mice tail. The chain is Venom allergen 5 from Vespa velutina (Asian yellow-legged hornet).